The sequence spans 1108 residues: Receptor-type guanylate cyclase gcy-20 (1108 aa).

An N-terminal signal peptide occupies residues 1 to 15 (MRILLLLLQNILVFC). Residues 16 to 474 (QFLQTIKVGL…ECPADFVKEY (459 aa)) lie on the Extracellular side of the membrane. N-linked (GlcNAc...) asparagine glycosylation is found at asparagine 66, asparagine 131, asparagine 319, asparagine 341, asparagine 366, and asparagine 380. Residues 475–495 (LVYTIIAAFIVILALLAGCAG) traverse the membrane as a helical segment. The Protein kinase domain maps to 483–803 (FIVILALLAG…IEQVRSHLNG (321 aa)). ATP-binding positions include 489 to 497 (LLAGCAGLL) and lysine 571. Residues 496–1108 (LLYTMHMKRK…QAGDNNSETV (613 aa)) are Cytoplasmic-facing. Residues 876 to 1006 (TIFFSDVVQF…DAVNTASRME (131 aa)) form the Guanylate cyclase domain. The segment at 1083 to 1108 (LEKNAEGSETSSLSVDQAGDNNSETV) is disordered. Positions 1089–1108 (GSETSSLSVDQAGDNNSETV) are enriched in polar residues.

It belongs to the adenylyl cyclase class-4/guanylyl cyclase family. As to expression, expressed asymmetrically in ASE left (ASEL) sensory neuron. Expressed in excretory gland and canal cell.

It localises to the cell membrane. It catalyses the reaction GTP = 3',5'-cyclic GMP + diphosphate. Its function is as follows. Guanylate cyclase involved in the production of the second messenger cGMP. The polypeptide is Receptor-type guanylate cyclase gcy-20 (Caenorhabditis elegans).